The chain runs to 232 residues: Ribosome maturation protein SDO1 homolog (232 aa).

Belongs to the SDO1/SBDS family.

The polypeptide is Ribosome maturation protein SDO1 homolog (Methanothermobacter thermautotrophicus (strain ATCC 29096 / DSM 1053 / JCM 10044 / NBRC 100330 / Delta H) (Methanobacterium thermoautotrophicum)).